Reading from the N-terminus, the 341-residue chain is UDP-N-acetylglucosamine--N-acetylmuramyl-(pentapeptide) pyrophosphoryl-undecaprenol N-acetylglucosamine transferase (341 aa).

Residues 10–12 (TGG), asparagine 124, serine 177, and glutamine 275 contribute to the UDP-N-acetyl-alpha-D-glucosamine site.

This sequence belongs to the glycosyltransferase 28 family. MurG subfamily.

It is found in the cell inner membrane. It catalyses the reaction di-trans,octa-cis-undecaprenyl diphospho-N-acetyl-alpha-D-muramoyl-L-alanyl-D-glutamyl-meso-2,6-diaminopimeloyl-D-alanyl-D-alanine + UDP-N-acetyl-alpha-D-glucosamine = di-trans,octa-cis-undecaprenyl diphospho-[N-acetyl-alpha-D-glucosaminyl-(1-&gt;4)]-N-acetyl-alpha-D-muramoyl-L-alanyl-D-glutamyl-meso-2,6-diaminopimeloyl-D-alanyl-D-alanine + UDP + H(+). Its pathway is cell wall biogenesis; peptidoglycan biosynthesis. Cell wall formation. Catalyzes the transfer of a GlcNAc subunit on undecaprenyl-pyrophosphoryl-MurNAc-pentapeptide (lipid intermediate I) to form undecaprenyl-pyrophosphoryl-MurNAc-(pentapeptide)GlcNAc (lipid intermediate II). The chain is UDP-N-acetylglucosamine--N-acetylmuramyl-(pentapeptide) pyrophosphoryl-undecaprenol N-acetylglucosamine transferase from Campylobacter hominis (strain ATCC BAA-381 / DSM 21671 / CCUG 45161 / LMG 19568 / NCTC 13146 / CH001A).